The chain runs to 139 residues: FAD synthase (139 aa).

ATP-binding positions include 8–9 (VF), 13–16 (HPGH), aspartate 92, and tyrosine 119.

The protein belongs to the archaeal FAD synthase family. Homodimer. It depends on a divalent metal cation as a cofactor.

It catalyses the reaction FMN + ATP + H(+) = FAD + diphosphate. It functions in the pathway cofactor biosynthesis; FAD biosynthesis; FAD from FMN: step 1/1. Its function is as follows. Catalyzes the transfer of the AMP portion of ATP to flavin mononucleotide (FMN) to produce flavin adenine dinucleotide (FAD) coenzyme. This is FAD synthase from Picrophilus torridus (strain ATCC 700027 / DSM 9790 / JCM 10055 / NBRC 100828 / KAW 2/3).